The sequence spans 416 residues: UDP-N-acetylglucosamine 1-carboxyvinyltransferase (416 aa).

Phosphoenolpyruvate is bound at residue 22 to 23; sequence KN. Arg91 is a binding site for UDP-N-acetyl-alpha-D-glucosamine. The active-site Proton donor is Cys115. Cys115 is modified (2-(S-cysteinyl)pyruvic acid O-phosphothioketal). UDP-N-acetyl-alpha-D-glucosamine contacts are provided by residues 120–124, Asp305, and Ile327; that span reads RPIDL.

This sequence belongs to the EPSP synthase family. MurA subfamily.

The protein resides in the cytoplasm. It carries out the reaction phosphoenolpyruvate + UDP-N-acetyl-alpha-D-glucosamine = UDP-N-acetyl-3-O-(1-carboxyvinyl)-alpha-D-glucosamine + phosphate. It participates in cell wall biogenesis; peptidoglycan biosynthesis. Its function is as follows. Cell wall formation. Adds enolpyruvyl to UDP-N-acetylglucosamine. The protein is UDP-N-acetylglucosamine 1-carboxyvinyltransferase of Buchnera aphidicola subsp. Acyrthosiphon pisum (strain APS) (Acyrthosiphon pisum symbiotic bacterium).